A 480-amino-acid chain; its full sequence is Lysostaphin (480 aa).

An N-terminal signal peptide occupies residues 1–23 (MKKTKNNYYTTPLAIGLSTFALA). Positions 24-234 (SIVYGGIQNE…ALVQNRTALR (211 aa)) are excised as a propeptide. A run of 13 repeats spans residues 49 to 61 (AEVE…VENT), 62 to 74 (AEVE…VENT), 75 to 87 (AEVE…VENT), 88 to 100 (AEVE…VENT), 101 to 113 (AEVE…VENT), 114 to 126 (AEVE…VENT), 127 to 139 (AEVE…VENT), 140 to 152 (AEVE…VENT), 153 to 165 (AEVE…VENT), 166 to 178 (AEVE…VENT), 179 to 191 (AEVE…VENT), 192 to 204 (AEVE…VENT), and 205 to 217 (AEVE…VENT). The 14 X 13 AA tandem repeats of A-E-V-E-T-S-K-[AP]-P-V-E-N-T stretch occupies residues 49–230 (AEVETSKPPV…ETSKALVQNR (182 aa)). The interval 51 to 219 (VETSKPPVEN…SKAPVENTAE (169 aa)) is disordered. Residues 218 to 230 (AEVETSKALVQNR) form a 14; approximate repeat. Zn(2+)-binding residues include His266 and Asp270. The active site involves His347. His349 contacts Zn(2+). Residues 400-468 (SESASFTPNT…YLPVRTWNKS (69 aa)) form the SH3b domain.

The protein belongs to the peptidase M23B family. Monomer. Requires Zn(2+) as cofactor.

The protein resides in the secreted. It carries out the reaction Hydrolysis of the -Gly-|-Gly- bond in the pentaglycine inter-peptide link joining staphylococcal cell wall peptidoglycans.. In terms of biological role, lyses staphylococcal cells by hydrolyzing the polyglycine interpeptide bridges of the peptidoglycan. This is Lysostaphin (lss) from Staphylococcus staphylolyticus.